Consider the following 430-residue polypeptide: Tryptophan synthase beta chain (430 aa).

At Lys95 the chain carries N6-(pyridoxal phosphate)lysine.

It belongs to the TrpB family. In terms of assembly, tetramer of two alpha and two beta chains. Requires pyridoxal 5'-phosphate as cofactor.

It catalyses the reaction (1S,2R)-1-C-(indol-3-yl)glycerol 3-phosphate + L-serine = D-glyceraldehyde 3-phosphate + L-tryptophan + H2O. It functions in the pathway amino-acid biosynthesis; L-tryptophan biosynthesis; L-tryptophan from chorismate: step 5/5. In terms of biological role, the beta subunit is responsible for the synthesis of L-tryptophan from indole and L-serine. This chain is Tryptophan synthase beta chain, found in Halobacterium salinarum (strain ATCC 29341 / DSM 671 / R1).